The sequence spans 467 residues: Uronate isomerase (467 aa).

The protein belongs to the metallo-dependent hydrolases superfamily. Uronate isomerase family.

It catalyses the reaction D-glucuronate = D-fructuronate. The enzyme catalyses aldehydo-D-galacturonate = keto-D-tagaturonate. Its pathway is carbohydrate metabolism; pentose and glucuronate interconversion. This chain is Uronate isomerase, found in Histophilus somni (strain 2336) (Haemophilus somnus).